Reading from the N-terminus, the 521-residue chain is Probable tRNA (uracil-O(2)-)-methyltransferase (521 aa).

The protein belongs to the TRM44 family.

It localises to the cytoplasm. It catalyses the reaction uridine(44) in tRNA(Ser) + S-adenosyl-L-methionine = 2'-O-methyluridine(44) in tRNA(Ser) + S-adenosyl-L-homocysteine + H(+). Functionally, probable adenosyl-L-methionine (AdoMet)-dependent tRNA (uracil-O(2)-)-methyltransferase. This Drosophila melanogaster (Fruit fly) protein is Probable tRNA (uracil-O(2)-)-methyltransferase (trmt44).